We begin with the raw amino-acid sequence, 250 residues long: Nuclear transcription factor Y subunit C-4 (250 aa).

Residues 219 to 250 (GIAYGGQQGHPGYLWQDPQEQQEEPPAEQQSD) form a disordered region. Residues 238 to 250 (EQQEEPPAEQQSD) show a composition bias toward acidic residues.

Belongs to the NFYC/HAP5 subunit family. Heterotrimeric transcription factor composed of three components, NF-YA, NF-YB and NF-YC. NF-YB and NF-YC must interact and dimerize for NF-YA association and DNA binding. Interacts with NFYB2. Interacts with NFYB8, NFYB10 and HD5/NFYB11.

The protein resides in the nucleus. It localises to the cytoplasm. In terms of biological role, probable transcription factor involved in the regulation of flowering time under long day (LD) conditions. Functions as a repressor of flowering, independently of HD1 and GHD7. Controls flowering time by negatively regulating the expression of EHD1 and HD3A. Component of the NF-Y/HAP transcription factor complex. The chain is Nuclear transcription factor Y subunit C-4 from Oryza sativa subsp. japonica (Rice).